Here is a 72-residue protein sequence, read N- to C-terminus: MKVGIHPEYKAVSATCSCGNTFEFNSTLAKESIHLDVCDKCHPFYTGKQRIVDTGGRVDRFNKRFGALSSKK.

Cys-16, Cys-18, Cys-38, and Cys-41 together coordinate Zn(2+).

This sequence belongs to the bacterial ribosomal protein bL31 family. Type A subfamily. As to quaternary structure, part of the 50S ribosomal subunit. Zn(2+) is required as a cofactor.

In terms of biological role, binds the 23S rRNA. The sequence is that of Large ribosomal subunit protein bL31 from Vibrio atlanticus (strain LGP32) (Vibrio splendidus (strain Mel32)).